Here is a 1373-residue protein sequence, read N- to C-terminus: DNA-directed RNA polymerase subunit beta (1373 aa).

This sequence belongs to the RNA polymerase beta chain family. In terms of assembly, the RNAP catalytic core consists of 2 alpha, 1 beta, 1 beta' and 1 omega subunit. When a sigma factor is associated with the core the holoenzyme is formed, which can initiate transcription.

It carries out the reaction RNA(n) + a ribonucleoside 5'-triphosphate = RNA(n+1) + diphosphate. DNA-dependent RNA polymerase catalyzes the transcription of DNA into RNA using the four ribonucleoside triphosphates as substrates. This is DNA-directed RNA polymerase subunit beta from Rickettsia felis (strain ATCC VR-1525 / URRWXCal2) (Rickettsia azadi).